Reading from the N-terminus, the 434-residue chain is Tol-Pal system protein TolB (434 aa).

Residues 1–21 form the signal peptide; the sequence is MIVRRALALAALALAASPALA. The segment at 411–434 is disordered; that stretch reads GDRQTPVTSGKTDLAAPAWGPLAP.

The protein belongs to the TolB family. The Tol-Pal system is composed of five core proteins: the inner membrane proteins TolA, TolQ and TolR, the periplasmic protein TolB and the outer membrane protein Pal. They form a network linking the inner and outer membranes and the peptidoglycan layer.

The protein localises to the periplasm. Functionally, part of the Tol-Pal system, which plays a role in outer membrane invagination during cell division and is important for maintaining outer membrane integrity. In Anaeromyxobacter dehalogenans (strain 2CP-C), this protein is Tol-Pal system protein TolB.